We begin with the raw amino-acid sequence, 358 residues long: UDP-N-acetylglucosamine--N-acetylmuramyl-(pentapeptide) pyrophosphoryl-undecaprenol N-acetylglucosamine transferase (358 aa).

UDP-N-acetyl-alpha-D-glucosamine is bound by residues arginine 166, serine 196, and glutamine 291.

Belongs to the glycosyltransferase 28 family. MurG subfamily.

It localises to the cell membrane. The catalysed reaction is Mur2Ac(oyl-L-Ala-gamma-D-Glu-L-Lys-D-Ala-D-Ala)-di-trans,octa-cis-undecaprenyl diphosphate + UDP-N-acetyl-alpha-D-glucosamine = beta-D-GlcNAc-(1-&gt;4)-Mur2Ac(oyl-L-Ala-gamma-D-Glu-L-Lys-D-Ala-D-Ala)-di-trans,octa-cis-undecaprenyl diphosphate + UDP + H(+). It functions in the pathway cell wall biogenesis; peptidoglycan biosynthesis. Its function is as follows. Cell wall formation. Catalyzes the transfer of a GlcNAc subunit on undecaprenyl-pyrophosphoryl-MurNAc-pentapeptide (lipid intermediate I) to form undecaprenyl-pyrophosphoryl-MurNAc-(pentapeptide)GlcNAc (lipid intermediate II). The sequence is that of UDP-N-acetylglucosamine--N-acetylmuramyl-(pentapeptide) pyrophosphoryl-undecaprenol N-acetylglucosamine transferase from Staphylococcus saprophyticus subsp. saprophyticus (strain ATCC 15305 / DSM 20229 / NCIMB 8711 / NCTC 7292 / S-41).